We begin with the raw amino-acid sequence, 226 residues long: Lysosomal-associated transmembrane protein 4B (226 aa).

4 helical membrane passes run isoleucine 26–alanine 46, methionine 72–glycine 92, tryptophan 100–isoleucine 120, and cysteine 153–isoleucine 173. The tract at residues proline 205–proline 221 is required for NEDD4 interaction.

It belongs to the LAPTM4/LAPTM5 transporter family. Homooligomer; upon reaching the lysosomes. Interacts with MCOLN1. Interacts with NEDD4; may play a role in the lysosomal sorting of LAPTM4B; enhances HGS association with NEDD4; mediates inhibition of EGFR degradation. Interacts with PIP5K1C; promotes SNX5 association with LAPTM4B; kinase activity of PIP5K1C is required; interaction is regulated by phosphatidylinositol 4,5-bisphosphate generated by PIP5K1C. Interacts with HGS; promotes HGS ubiquitination. Interacts with SNX5. Interacts with SLC3A2 and SLC7A5; recruits SLC3A2 and SLC7A5 to lysosomes to promote leucine uptake into these organelles and is required for mTORC1 activation. Interacts with LRRC32; decreases TGFB1 production in regulatory T cells. Interacts with BECN1; competes with EGFR for LAPTM4B binding; regulates EGFR activity. Interacts with EGFR; positively correlates with EGFR activation. Post-translationally, undergoes proteolytic cleavage following delivery to the lysosomes. Ubiquitinated by NEDD4.

It is found in the endomembrane system. The protein localises to the late endosome membrane. Its subcellular location is the cell membrane. It localises to the cell projection. The protein resides in the lysosome membrane. It is found in the endosome membrane. The protein localises to the endosome. Its subcellular location is the multivesicular body membrane. It localises to the multivesicular body lumen. Its function is as follows. Required for optimal lysosomal function. Blocks EGF-stimulated EGFR intraluminal sorting and degradation. Conversely by binding with the phosphatidylinositol 4,5-bisphosphate, regulates its PIP5K1C interaction, inhibits HGS ubiquitination and relieves LAPTM4B inhibition of EGFR degradation. Recruits SLC3A2 and SLC7A5 (the Leu transporter) to the lysosome, promoting entry of leucine and other essential amino acid (EAA) into the lysosome, stimulating activation of proton-transporting vacuolar (V)-ATPase protein pump (V-ATPase) and hence mTORC1 activation. Plays a role as negative regulator of TGFB1 production in regulatory T cells. Binds ceramide and facilitates its exit from late endosome in order to control cell death pathways. This is Lysosomal-associated transmembrane protein 4B from Macaca fascicularis (Crab-eating macaque).